The following is a 1711-amino-acid chain: Hybrid PKS-NRPS synthetase TAS1 (1711 aa).

Residues 43 to 397 (APLSKMQRAL…RNGLNSEHRV (355 aa)) form a condensation (C) domain region. Positions 506-907 (QQQATLRPEQ…TVLLYGRINN (402 aa)) are adenylation (A) domain. Residues 1043–1119 (LEWAAAKARI…SQVGLVQSRR (77 aa)) form the Carrier 1 domain. Serine 1079 is modified (O-(pantetheine 4'-phosphoryl)serine). Over residues 1114-1127 (LVQSRRGSSGSPRT) the composition is skewed to polar residues. The segment at 1114 to 1159 (LVQSRRGSSGSPRTVRSHARPQRKAKTPPRQARPETPESDYDQLPD) is disordered. A compositionally biased stretch (basic residues) spans 1128-1140 (VRSHARPQRKAKT). In terms of domain architecture, Carrier 2 spans 1159–1236 (DLRDDVQQSI…AQVELLGRFT (78 aa)). O-(pantetheine 4'-phosphoryl)serine is present on serine 1195. Residues 1266-1683 (REQYAIVGMS…GSTAHVVLSA (418 aa)) form the Ketosynthase family 3 (KS3) domain. Residues cysteine 1429, histidine 1565, and asparagine 1608 each act as for beta-ketoacyl synthase activity in the active site.

In the N-terminal section; belongs to the NRP synthetase family. Requires pantetheine 4'-phosphate as cofactor.

The catalysed reaction is acetoacetyl-CoA + L-isoleucine + ATP = tenuazonic acid + AMP + diphosphate + CoA + 2 H(+). In terms of biological role, hybrid PKS-NRPS synthetase that mediates the biosynthesis of the toxin tenuazonic acid (TeA), an inhibitor of protein biosynthesis on ribosomes by suppressing the release of new protein. TAS1 alone is sufficient for TeA synthesis via the condensation of isoleucine (Ile) with acetoacetyl-CoA by the N-terminal NRPS module and subsequent cyclization conducted by the C-terminal KS domain. This Botryobasidium botryosum (strain FD-172 SS1) protein is Hybrid PKS-NRPS synthetase TAS1.